The sequence spans 43 residues: Myotoxin-2 (43 aa).

3 disulfide bridges follow: Cys4–Cys36, Cys11–Cys30, and Cys18–Cys37.

Belongs to the crotamine-myotoxin family. As to quaternary structure, monomer. In terms of tissue distribution, expressed by the venom gland.

It is found in the secreted. Functionally, cationic peptide that possesses multiple functions. It acts as a cell-penetrating peptide (CPP), and as a potent voltage-gated potassium channel (Kv) inhibitor. It exhibits antimicrobial activities, hind limb paralysis, and severe muscle necrosis by a non-enzymatic mechanism. The chain is Myotoxin-2 from Crotalus concolor (Midget faded rattlesnake).